A 100-amino-acid polypeptide reads, in one-letter code: C-X-C motif chemokine 2 (100 aa).

The first 27 residues, 1–27, serve as a signal peptide directing secretion; it reads MAPPTCRLLSAALVLLLLLATNHQATG. 2 disulfide bridges follow: cysteine 36–cysteine 62 and cysteine 38–cysteine 78.

Belongs to the intercrine alpha (chemokine CxC) family. Homotetramer.

It is found in the secreted. Chemotactic for human polymorphonuclear leukocytes but does not induce chemokinesis or an oxidative burst. The polypeptide is C-X-C motif chemokine 2 (Cxcl2) (Mus musculus (Mouse)).